We begin with the raw amino-acid sequence, 173 residues long: Disulfide bond formation protein B (173 aa).

At 1–11 the chain is on the cytoplasmic side; it reads MNALQWSFRAQ. A helical membrane pass occupies residues 12 to 28; that stretch reads CLTGFLFCTGLLAYAIF. Residues 29 to 46 lie on the Periplasmic side of the membrane; sequence LQLHQGLEPCPLCIFQRI. A disulfide bridge links Cys-38 with Cys-41. The chain crosses the membrane as a helical span at residues 47–63; it reads AFAVLGILFLIAGLYNS. At 64–70 the chain is on the cytoplasmic side; sequence SNVYTRK. The helical transmembrane segment at 71-88 threads the bilayer; sequence AYGLLIFLTAIIGTGIAG. Residues 89–145 lie on the Periplasmic side of the membrane; that stretch reads RHVWVQLMPHNTISSCGSPLSFLSETMGPFEVFRTVLTGTSNCGNIDWRFLGLSMPM. The cysteines at positions 104 and 131 are disulfide-linked. A helical transmembrane segment spans residues 146 to 164; that stretch reads WSMFWFVALALLGLLVGFK. Over 165-173 the chain is Cytoplasmic; sequence AERRKPLFS.

This sequence belongs to the DsbB family.

It is found in the cell inner membrane. In terms of biological role, required for disulfide bond formation in some periplasmic proteins. Acts by oxidizing the DsbA protein. The chain is Disulfide bond formation protein B from Xylella fastidiosa (strain Temecula1 / ATCC 700964).